A 257-amino-acid polypeptide reads, in one-letter code: Dihydroorotate dehydrogenase B (NAD(+)), electron transfer subunit (257 aa).

Residues Ile2–Ile100 enclose the FAD-binding FR-type domain. FAD is bound by residues Arg51–Ser54, Val68–Arg70, and Gly75–Thr76. Cys220, Cys225, Cys228, and Cys244 together coordinate [2Fe-2S] cluster.

Belongs to the PyrK family. As to quaternary structure, heterotetramer of 2 PyrK and 2 PyrD type B subunits. Requires [2Fe-2S] cluster as cofactor. The cofactor is FAD.

It participates in pyrimidine metabolism; UMP biosynthesis via de novo pathway; orotate from (S)-dihydroorotate (NAD(+) route): step 1/1. Its function is as follows. Responsible for channeling the electrons from the oxidation of dihydroorotate from the FMN redox center in the PyrD type B subunit to the ultimate electron acceptor NAD(+). This Streptococcus thermophilus (strain ATCC BAA-491 / LMD-9) protein is Dihydroorotate dehydrogenase B (NAD(+)), electron transfer subunit.